The sequence spans 188 residues: ADP-ribosylation factor J (188 aa).

GTP is bound by residues 34-40, 75-79, and 134-137; these read DGAGKST, DVGGQ, and NKQD.

Belongs to the small GTPase superfamily. Arf family.

It is found in the golgi apparatus. Its function is as follows. GTP-binding protein that may be involved in protein trafficking. May modulate vesicle budding and uncoating within the Golgi apparatus. The chain is ADP-ribosylation factor J (arrJ) from Dictyostelium discoideum (Social amoeba).